Consider the following 220-residue polypeptide: Ribosomal RNA small subunit methyltransferase Nep1 (220 aa).

S-adenosyl-L-methionine is bound by residues G178, G183, and 196–201 (IYKEPL).

This sequence belongs to the class IV-like SAM-binding methyltransferase superfamily. RNA methyltransferase NEP1 family. As to quaternary structure, homodimer.

The enzyme catalyses a pseudouridine in rRNA + S-adenosyl-L-methionine = an N(1)-methylpseudouridine in rRNA + S-adenosyl-L-homocysteine + H(+). In terms of biological role, methyltransferase involved in ribosomal biogenesis. Specifically catalyzes the N1-methylation of the pseudouridine corresponding to position 914 in M.jannaschii 16S rRNA. This is Ribosomal RNA small subunit methyltransferase Nep1 from Thermococcus sibiricus (strain DSM 12597 / MM 739).